The following is a 168-amino-acid chain: Ribosome maturation factor RimM (168 aa).

One can recognise a PRC barrel domain in the interval 96-168 (KDEYYWGDLV…RIRVAWQKDW (73 aa)).

It belongs to the RimM family. Binds ribosomal protein uS19.

It localises to the cytoplasm. In terms of biological role, an accessory protein needed during the final step in the assembly of 30S ribosomal subunit, possibly for assembly of the head region. Essential for efficient processing of 16S rRNA. May be needed both before and after RbfA during the maturation of 16S rRNA. It has affinity for free ribosomal 30S subunits but not for 70S ribosomes. This chain is Ribosome maturation factor RimM, found in Azoarcus sp. (strain BH72).